Consider the following 478-residue polypeptide: Chromosomal replication initiator protein DnaA (478 aa).

The segment at 1–71 is domain I, interacts with DnaA modulators; sequence MKEFWQTCVS…EALAAEWFQR (71 aa). The domain II stretch occupies residues 71–140; that stretch reads RPVQVAFELP…DAAGVVYERS (70 aa). The domain III, AAA+ region stretch occupies residues 141-357; that stretch reads RLNTDLTFDN…GALRKVLAYA (217 aa). ATP contacts are provided by glycine 185, glycine 187, lysine 188, and threonine 189. The tract at residues 358 to 478 is domain IV, binds dsDNA; it reads RFHGRDVLSV…LHVLEQTLKG (121 aa).

It belongs to the DnaA family. As to quaternary structure, oligomerizes as a right-handed, spiral filament on DNA at oriC.

It localises to the cytoplasm. Its function is as follows. Plays an essential role in the initiation and regulation of chromosomal replication. ATP-DnaA binds to the origin of replication (oriC) to initiate formation of the DNA replication initiation complex once per cell cycle. Binds the DnaA box (a 9 base pair repeat at the origin) and separates the double-stranded (ds)DNA. Forms a right-handed helical filament on oriC DNA; dsDNA binds to the exterior of the filament while single-stranded (ss)DNA is stabiized in the filament's interior. The ATP-DnaA-oriC complex binds and stabilizes one strand of the AT-rich DNA unwinding element (DUE), permitting loading of DNA polymerase. After initiation quickly degrades to an ADP-DnaA complex that is not apt for DNA replication. Binds acidic phospholipids. This is Chromosomal replication initiator protein DnaA from Bordetella petrii (strain ATCC BAA-461 / DSM 12804 / CCUG 43448).